The primary structure comprises 66 residues: Opicalcin-2 (66 aa).

Positions 1 to 22 are cleaved as a signal peptide; the sequence is MKPSLIIVTFIVVFMTISCVAA. Positions 23–31 are excised as a propeptide; sequence DDEQETWIE. 3 cysteine pairs are disulfide-bonded: C36–C50, C43–C54, and C49–C65. Positions 55–57 are essential for stimulation of [3H]ryanodine binding to RYR1; it reads KRR.

Belongs to the scorpion calcin family. As to expression, expressed by the venom gland.

It is found in the secreted. This toxin stabilizes ryanodine receptor 1 (RyR1) opening in a long-lasting subconductance state (40% of the full conductance state). Furthermore, it triggers calcium release from sarcoplasmic vesicles (64.2 nM are enough to induce a sharp release, and 50% of the total calcium is released after toxin (100 nM) addition) probably by acting as a cell-penetrating peptide (CPP). In addition, it has been shown to dose-dependently stimulate ryanodine binding to RyR1 (EC(50)=3.2 nM). It also augments the bell-shaped calcium-[3H]ryanodine binding curve that is maximal at about 10 uM calcium concentration. It binds a different site as ryanodine. It acts synergistically with caffeine. In vivo, intracerebroventricular injection into mice induces neurotoxic symptoms, followed by death. The sequence is that of Opicalcin-2 from Opistophthalmus carinatus (African yellow leg scorpion).